A 325-amino-acid polypeptide reads, in one-letter code: Holliday junction branch migration complex subunit RuvB (325 aa).

The large ATPase domain (RuvB-L) stretch occupies residues 1-181 (MENRLINPVE…FGIVQRLEFY (181 aa)). Residues Ile-20, Arg-21, Gly-62, Lys-65, Thr-66, Thr-67, 128–130 (EDF), Arg-171, Tyr-181, and Arg-218 contribute to the ATP site. Thr-66 lines the Mg(2+) pocket. The segment at 182 to 252 (NIEDLTTIVS…IADSALDMLA (71 aa)) is small ATPAse domain (RuvB-S). The segment at 255 to 325 (RRGLDHLDRR…VLTQMAIDQL (71 aa)) is head domain (RuvB-H). Residues Arg-291, Arg-310, and Arg-315 each coordinate DNA.

Belongs to the RuvB family. As to quaternary structure, homohexamer. Forms an RuvA(8)-RuvB(12)-Holliday junction (HJ) complex. HJ DNA is sandwiched between 2 RuvA tetramers; dsDNA enters through RuvA and exits via RuvB. An RuvB hexamer assembles on each DNA strand where it exits the tetramer. Each RuvB hexamer is contacted by two RuvA subunits (via domain III) on 2 adjacent RuvB subunits; this complex drives branch migration. In the full resolvosome a probable DNA-RuvA(4)-RuvB(12)-RuvC(2) complex forms which resolves the HJ.

It is found in the cytoplasm. The catalysed reaction is ATP + H2O = ADP + phosphate + H(+). The RuvA-RuvB-RuvC complex processes Holliday junction (HJ) DNA during genetic recombination and DNA repair, while the RuvA-RuvB complex plays an important role in the rescue of blocked DNA replication forks via replication fork reversal (RFR). RuvA specifically binds to HJ cruciform DNA, conferring on it an open structure. The RuvB hexamer acts as an ATP-dependent pump, pulling dsDNA into and through the RuvAB complex. RuvB forms 2 homohexamers on either side of HJ DNA bound by 1 or 2 RuvA tetramers; 4 subunits per hexamer contact DNA at a time. Coordinated motions by a converter formed by DNA-disengaged RuvB subunits stimulates ATP hydrolysis and nucleotide exchange. Immobilization of the converter enables RuvB to convert the ATP-contained energy into a lever motion, pulling 2 nucleotides of DNA out of the RuvA tetramer per ATP hydrolyzed, thus driving DNA branch migration. The RuvB motors rotate together with the DNA substrate, which together with the progressing nucleotide cycle form the mechanistic basis for DNA recombination by continuous HJ branch migration. Branch migration allows RuvC to scan DNA until it finds its consensus sequence, where it cleaves and resolves cruciform DNA. The polypeptide is Holliday junction branch migration complex subunit RuvB (Psychrobacter sp. (strain PRwf-1)).